The primary structure comprises 219 residues: MAPPPSLAGLQVEATAFPPSVKPPGSSNTLFLGGAGVRGLEIQGNFVKFTAIGVYLEDNAVPLLAVKWKGKTAEELSESVEFFRDIVTGPFEKFIQVTTILPLTGQQYSEKVSENCVAFWKSVGIYTDAEGKAIEKFIEVFKDQNFPPGASILFTQSPKGSLTICFSKDASVPEAANAVIENKLLSEAVLESILGKHGVSPAAKRSLAARLSELLNGCK.

T50, N115, and S192 together coordinate substrate.

This sequence belongs to the chalcone isomerase family.

The catalysed reaction is a chalcone = a flavanone.. Its pathway is secondary metabolite biosynthesis; flavonoid biosynthesis. Catalyzes the intramolecular cyclization of bicyclic chalcones into tricyclic (S)-flavanones. Responsible for the isomerization of 4,2',4',6'-tetrahydroxychalcone (also termed chalcone) into naringenin. The polypeptide is Chalcone--flavanone isomerase (CHI) (Pyrus communis (Pear)).